The following is a 344-amino-acid chain: L-rhamnose-proton symporter (344 aa).

The next 10 membrane-spanning stretches (helical) occupy residues 4–24, 38–58, 68–88, 101–121, 137–157, 175–195, 214–234, 259–279, 290–310, and 323–343; these read AITMGIFWHLIGAASAACFYA, WSVGGIVSWIILPWAISALLL, FSLSTLLPVFLFGAMWGIGNI, MGIGIAIGITLIVGTLMTPII, TLLGVLVALIGVGIVTRAGQL, LVLAVMCGIFSAGMSFAMNAA, LPSYVVIMGGGAIINLGFCFI, VLLSTLGGLMWYLQFFFYAWG, ISWMLHMSFYVLCGGIVGLVL, and VLSLGCVVIIVAANIVGIGMA.

Belongs to the L-rhamnose transporter (TC 2.A.7.6) family.

The protein localises to the cell inner membrane. The enzyme catalyses L-rhamnopyranose(in) + H(+)(in) = L-rhamnopyranose(out) + H(+)(out). In terms of biological role, uptake of L-rhamnose across the cytoplasmic membrane with the concomitant transport of protons into the cell (symport system). The polypeptide is L-rhamnose-proton symporter (Escherichia coli (strain ATCC 8739 / DSM 1576 / NBRC 3972 / NCIMB 8545 / WDCM 00012 / Crooks)).